Here is a 603-residue protein sequence, read N- to C-terminus: Granule-bound starch synthase 1, chloroplastic/amyloplastic (603 aa).

The transit peptide at 1-75 (MATITGSSMP…SEKSLGKIVC (75 aa)) directs the protein to the chloroplast. K91 contacts ADP-alpha-D-glucose.

The protein belongs to the glycosyltransferase 1 family. Bacterial/plant glycogen synthase subfamily. Expressed in pods and leaves. No expression in flowers or stipules.

The protein resides in the plastid. It is found in the chloroplast. The protein localises to the amyloplast. It carries out the reaction an NDP-alpha-D-glucose + [(1-&gt;4)-alpha-D-glucosyl](n) = [(1-&gt;4)-alpha-D-glucosyl](n+1) + a ribonucleoside 5'-diphosphate + H(+). It participates in glycan biosynthesis; starch biosynthesis. Its function is as follows. May be responsible for the synthesis of amylose. In Pisum sativum (Garden pea), this protein is Granule-bound starch synthase 1, chloroplastic/amyloplastic.